Reading from the N-terminus, the 444-residue chain is Ribosomal protein uS12 methylthiotransferase RimO (444 aa).

The MTTase N-terminal domain maps to 3-119; sequence IKIGLVSLGC…IARAVRRVLE (117 aa). 6 residues coordinate [4Fe-4S] cluster: Cys12, Cys48, Cys82, Cys156, Cys160, and Cys163. One can recognise a Radical SAM core domain in the interval 142–372; the sequence is ATPPYTAYLK…MMLQQEISLQ (231 aa). The TRAM domain maps to 375–444; the sequence is LKRVGEVIEV…EYDLTGETVL (70 aa).

The protein belongs to the methylthiotransferase family. RimO subfamily. [4Fe-4S] cluster is required as a cofactor.

It is found in the cytoplasm. The enzyme catalyses L-aspartate(89)-[ribosomal protein uS12]-hydrogen + (sulfur carrier)-SH + AH2 + 2 S-adenosyl-L-methionine = 3-methylsulfanyl-L-aspartate(89)-[ribosomal protein uS12]-hydrogen + (sulfur carrier)-H + 5'-deoxyadenosine + L-methionine + A + S-adenosyl-L-homocysteine + 2 H(+). Catalyzes the methylthiolation of an aspartic acid residue of ribosomal protein uS12. The sequence is that of Ribosomal protein uS12 methylthiotransferase RimO from Pelotomaculum thermopropionicum (strain DSM 13744 / JCM 10971 / SI).